A 328-amino-acid chain; its full sequence is Ornithine transcarbamylase, mitochondrial (328 aa).

Residues 1–6 (GGQPLQ) constitute a mitochondrion transit peptide. Lys-44 bears the N6-acetyllysine; alternate mark. Lys-44 is subject to N6-succinyllysine; alternate. Lys-54 bears the N6-succinyllysine mark. Lys-62 carries the post-translational modification N6-acetyllysine; alternate. Lys-62 bears the N6-succinyllysine; alternate mark. Position 64-68 (64-68 (STRTR)) interacts with carbamoyl phosphate. Ser-107 is modified (phosphoserine). Carbamoyl phosphate is bound at residue Arg-115. Position 115 (Arg-115) interacts with L-ornithine. Lys-118 is modified (N6-acetyllysine; alternate). Residue Lys-118 is modified to N6-succinyllysine; alternate. Position 142 (His-142) interacts with carbamoyl phosphate. Asn-173 contacts L-ornithine. An N6-acetyllysine; alternate mark is found at Lys-195, Lys-205, and Lys-212. Lys-195, Lys-205, and Lys-212 each carry N6-succinyllysine; alternate. Residue 237-241 (DTWIS) participates in L-ornithine binding. An N6-succinyllysine mark is found at Lys-248 and Lys-263. L-ornithine is bound at residue 276 to 279 (HCLP). Cys-277 is a catalytic residue. Lys-281 carries the post-translational modification N6-acetyllysine; alternate. Position 281 is an N6-succinyllysine; alternate (Lys-281). Arg-304 contributes to the carbamoyl phosphate binding site. Arg-304 contacts L-ornithine.

This sequence belongs to the aspartate/ornithine carbamoyltransferase superfamily. OTCase family. Homotrimer. Post-translationally, acetylation at Lys-62 negatively regulates ornithine carbamoyltransferase activity in response to nutrient signals.

The protein resides in the mitochondrion matrix. It carries out the reaction carbamoyl phosphate + L-ornithine = L-citrulline + phosphate + H(+). Its pathway is nitrogen metabolism; urea cycle; L-citrulline from L-ornithine and carbamoyl phosphate: step 1/1. Negatively regulated by lysine acetylation. In terms of biological role, catalyzes the second step of the urea cycle, the condensation of carbamoyl phosphate with L-ornithine to form L-citrulline. The urea cycle ensures the detoxification of ammonia by converting it to urea for excretion. The protein is Ornithine transcarbamylase, mitochondrial of Sus scrofa (Pig).